Here is a 185-residue protein sequence, read N- to C-terminus: Elongation factor P (185 aa).

The protein belongs to the elongation factor P family.

The protein localises to the cytoplasm. It participates in protein biosynthesis; polypeptide chain elongation. In terms of biological role, involved in peptide bond synthesis. Stimulates efficient translation and peptide-bond synthesis on native or reconstituted 70S ribosomes in vitro. Probably functions indirectly by altering the affinity of the ribosome for aminoacyl-tRNA, thus increasing their reactivity as acceptors for peptidyl transferase. The protein is Elongation factor P of Desulfitobacterium hafniense (strain DSM 10664 / DCB-2).